A 642-amino-acid polypeptide reads, in one-letter code: Threonine--tRNA ligase (642 aa).

Positions 1–61 (MPVITLPDGS…ENDATLAIIT (61 aa)) constitute a TGS domain. Residues 243 to 534 (DHRKIGKQLD…LTEEFAGFFP (292 aa)) are catalytic. Zn(2+) is bound by residues Cys334, His385, and His511.

This sequence belongs to the class-II aminoacyl-tRNA synthetase family. Homodimer. It depends on Zn(2+) as a cofactor.

The protein resides in the cytoplasm. It catalyses the reaction tRNA(Thr) + L-threonine + ATP = L-threonyl-tRNA(Thr) + AMP + diphosphate + H(+). Functionally, catalyzes the attachment of threonine to tRNA(Thr) in a two-step reaction: L-threonine is first activated by ATP to form Thr-AMP and then transferred to the acceptor end of tRNA(Thr). Also edits incorrectly charged L-seryl-tRNA(Thr). In Salmonella choleraesuis (strain SC-B67), this protein is Threonine--tRNA ligase.